Consider the following 359-residue polypeptide: Probable isoaspartyl peptidase/L-asparaginase 3 (359 aa).

The active-site Nucleophile is Thr224. Residues 252 to 255 (RVGD) and 275 to 278 (TGDG) each bind substrate.

This sequence belongs to the Ntn-hydrolase family. Heterotetramer of two alpha and two beta chains arranged as a dimer of alpha/beta heterodimers. In terms of processing, cleaved into an alpha and beta chain by autocatalysis; this activates the enzyme. The N-terminal residue of the beta subunit is responsible for the nucleophile hydrolase activity.

It carries out the reaction Cleavage of a beta-linked Asp residue from the N-terminus of a polypeptide.. In terms of biological role, acts in asparagine catabolism but also in the final steps of protein degradation via hydrolysis of a range of isoaspartyl dipeptides. The chain is Probable isoaspartyl peptidase/L-asparaginase 3 from Arabidopsis thaliana (Mouse-ear cress).